A 107-amino-acid polypeptide reads, in one-letter code: Universal stress protein B homolog (107 aa).

A run of 2 helical transmembrane segments spans residues 6–25 and 89–106; these read TILF…YVTA and LFIL…VAFM.

Belongs to the universal stress protein B family.

Its subcellular location is the cell inner membrane. The sequence is that of Universal stress protein B homolog from Vibrio cholerae serotype O1 (strain ATCC 39541 / Classical Ogawa 395 / O395).